We begin with the raw amino-acid sequence, 398 residues long: Energy-coupling factor transporter ATP-binding protein EcfA2 (398 aa).

The 236-residue stretch at 5 to 240 (IELKDLEYAY…KELVRRARLK (236 aa)) folds into the ABC transporter domain. 38–45 (GSNGAGKS) contributes to the ATP binding site.

This sequence belongs to the ABC transporter superfamily. Energy-coupling factor EcfA family. In terms of assembly, forms a stable energy-coupling factor (ECF) transporter complex composed of 2 membrane-embedded substrate-binding proteins (S component), 2 ATP-binding proteins (A component) and 2 transmembrane proteins (T component).

The protein resides in the cell membrane. Its function is as follows. ATP-binding (A) component of a common energy-coupling factor (ECF) ABC-transporter complex. Unlike classic ABC transporters this ECF transporter provides the energy necessary to transport a number of different substrates. The chain is Energy-coupling factor transporter ATP-binding protein EcfA2 from Methanospirillum hungatei JF-1 (strain ATCC 27890 / DSM 864 / NBRC 100397 / JF-1).